The chain runs to 2157 residues: Mediator of RNA polymerase II transcription subunit 12-like protein (2157 aa).

Residues 1-31 (MAAFGLLSYEQRPLKRPRLGPPDVYPQDPKQ) are disordered. Thr-462 is subject to Phosphothreonine. The segment covering 1437 to 1456 (ELEKGQHLGSSSKKERDRQK) has biased composition (basic and acidic residues). Disordered stretches follow at residues 1437 to 1461 (ELEK…KSMS), 1724 to 1807 (RSYY…SQMT), and 2040 to 2157 (IDAV…PSHF). The segment covering 1771-1780 (TKGRKRKTKS) has biased composition (basic residues). Composition is skewed to low complexity over residues 2063 to 2076 (PRQQ…RLLQ), 2083 to 2101 (QQPQ…QSQA), and 2116 to 2136 (RQGL…RQLQ). Over residues 2137–2148 (KQLSSNQPQQGV) the composition is skewed to polar residues.

It belongs to the Mediator complex subunit 12 family. In terms of assembly, may be a component of the Mediator complex, which is known to be composed of MED1, MED4, MED6, MED7, MED8, MED9, MED10, MED11, MED12, MED13, MED13L, MED14, MED15, MED16, MED17, MED18, MED19, MED20, MED21, MED22, MED23, MED24, MED25, MED26, MED27, MED29, MED30, MED31, CCNC, CDK8 and CDC2L6/CDK11. The MED12, MED13, CCNC and CDK8 subunits form a distinct module termed the CDK8 module. Mediator containing the CDK8 module is less active than Mediator lacking this module in supporting transcriptional activation. Individual preparations of the Mediator complex lacking one or more distinct subunits have been variously termed ARC, CRSP, DRIP, PC2, SMCC and TRAP.

The protein resides in the nucleus. May be a component of the Mediator complex, a coactivator involved in the regulated transcription of nearly all RNA polymerase II-dependent genes. Mediator functions as a bridge to convey information from gene-specific regulatory proteins to the basal RNA polymerase II transcription machinery. Mediator is recruited to promoters by direct interactions with regulatory proteins and serves as a scaffold for the assembly of a functional preinitiation complex with RNA polymerase II and the general transcription factors. The polypeptide is Mediator of RNA polymerase II transcription subunit 12-like protein (Med12l) (Mus musculus (Mouse)).